Consider the following 61-residue polypeptide: Large ribosomal subunit protein bL28 (61 aa).

The disordered stretch occupies residues 1–27 (MAKDFVTGKKTTFGNTRSHALNSSSRS). Over residues 9-27 (KKTTFGNTRSHALNSSSRS) the composition is skewed to polar residues.

Belongs to the bacterial ribosomal protein bL28 family.

The polypeptide is Large ribosomal subunit protein bL28 (Lactobacillus delbrueckii subsp. bulgaricus (strain ATCC 11842 / DSM 20081 / BCRC 10696 / JCM 1002 / NBRC 13953 / NCIMB 11778 / NCTC 12712 / WDCM 00102 / Lb 14)).